The sequence spans 387 residues: MSVNHGQGNKDLAKTLLVMAGGTGGHIFPGIAVADELKAQGWKIHWLGTADRMEAQIVPMHGYDISFINISGLRGKNLLTTLVMPFKLLRSLFQARRVIKTVKPDVVIGMGGYASAPGGLAAWLSKIPLIVHEQNAAAGLSNRLLARIANKVCCAFPNAFVSGIDVEVVGNPLRASIGQQALVSENIDQSHEGSKNILVVGGSLGAQVLNKVMPDSFKDLSESDEKYCIWHQTGDNNQALVTASYKQEYIDTGKVRVTEFITDIAAAYQWADIVICRAGALTVSELAMAATPAIFVPLPHAVDDHQTKNALYLVKRDAAKLLPQAELNNESITSLIIELFDQPQTLADMAKASLSAATSDASQKVAKLCQQLSISNGAKLRNNEEKI.

UDP-N-acetyl-alpha-D-glucosamine-binding positions include 23-25, Asn135, Arg174, Ser203, Ile261, 280-285, and Gln306; these read TGG and ALTVSE.

It belongs to the glycosyltransferase 28 family. MurG subfamily.

The protein localises to the cell inner membrane. It carries out the reaction di-trans,octa-cis-undecaprenyl diphospho-N-acetyl-alpha-D-muramoyl-L-alanyl-D-glutamyl-meso-2,6-diaminopimeloyl-D-alanyl-D-alanine + UDP-N-acetyl-alpha-D-glucosamine = di-trans,octa-cis-undecaprenyl diphospho-[N-acetyl-alpha-D-glucosaminyl-(1-&gt;4)]-N-acetyl-alpha-D-muramoyl-L-alanyl-D-glutamyl-meso-2,6-diaminopimeloyl-D-alanyl-D-alanine + UDP + H(+). Its pathway is cell wall biogenesis; peptidoglycan biosynthesis. Cell wall formation. Catalyzes the transfer of a GlcNAc subunit on undecaprenyl-pyrophosphoryl-MurNAc-pentapeptide (lipid intermediate I) to form undecaprenyl-pyrophosphoryl-MurNAc-(pentapeptide)GlcNAc (lipid intermediate II). This Colwellia psychrerythraea (strain 34H / ATCC BAA-681) (Vibrio psychroerythus) protein is UDP-N-acetylglucosamine--N-acetylmuramyl-(pentapeptide) pyrophosphoryl-undecaprenol N-acetylglucosamine transferase.